The following is a 237-amino-acid chain: Demethylmenaquinone methyltransferase (237 aa).

S-adenosyl-L-methionine is bound by residues T58, D79, and 106–107 (NA).

This sequence belongs to the class I-like SAM-binding methyltransferase superfamily. MenG/UbiE family.

The enzyme catalyses a 2-demethylmenaquinol + S-adenosyl-L-methionine = a menaquinol + S-adenosyl-L-homocysteine + H(+). It functions in the pathway quinol/quinone metabolism; menaquinone biosynthesis; menaquinol from 1,4-dihydroxy-2-naphthoate: step 2/2. Methyltransferase required for the conversion of demethylmenaquinol (DMKH2) to menaquinol (MKH2). The chain is Demethylmenaquinone methyltransferase from Bacillus cereus (strain B4264).